A 490-amino-acid chain; its full sequence is Endo-1,6-beta-D-glucanase BGN16.3 (490 aa).

Positions 1–28 (MRYALIASMLGQAAISVAMPSEPAHSPR) are cleaved as a signal peptide. Catalysis depends on Glu243, which acts as the Proton donor. The active-site Nucleophile is Glu339.

This sequence belongs to the glycosyl hydrolase 30 family.

It localises to the secreted. The protein localises to the extracellular space. The catalysed reaction is Random hydrolysis of (1-&gt;6)-linkages in (1-&gt;6)-beta-D-glucans.. Functionally, has highest activity on the linear beta-1,6-glucan pustulan. Lower activity against yeast glucan and laminarin (beta-1,3-glucans with beta-1,6-branches). No activity on colloidal chitin, pachyman, starch, cellulose, nigeran, dextran or gentobiose. This Trichoderma harzianum (Hypocrea lixii) protein is Endo-1,6-beta-D-glucanase BGN16.3.